Reading from the N-terminus, the 171-residue chain is Protein-export protein SecB (171 aa).

Belongs to the SecB family. As to quaternary structure, homotetramer, a dimer of dimers. One homotetramer interacts with 1 SecA dimer.

It localises to the cytoplasm. In terms of biological role, one of the proteins required for the normal export of preproteins out of the cell cytoplasm. It is a molecular chaperone that binds to a subset of precursor proteins, maintaining them in a translocation-competent state. It also specifically binds to its receptor SecA. The polypeptide is Protein-export protein SecB (Histophilus somni (strain 129Pt) (Haemophilus somnus)).